Consider the following 631-residue polypeptide: ATP-dependent zinc metalloprotease FtsH (631 aa).

The Stromal segment spans residues 1 to 2 (MK). Residues 3–23 (ISWKNILLTLIPLGLISFLVW) traverse the membrane as a helical segment. Residues 24–118 (QGFNNTTNPQ…AHATNDSTPA (95 aa)) lie on the Lumenal side of the membrane. The helical transmembrane segment at 119–139 (WSLIGNLIFPILLIAGLAFLF) threads the bilayer. The Stromal portion of the chain corresponds to 140–631 (RRSSNLPGGP…IDYKSQLKST (492 aa)). 213 to 220 (GPPGTGKT) is a binding site for ATP. Position 434 (H434) interacts with Zn(2+). E435 is a catalytic residue. 2 residues coordinate Zn(2+): H438 and D512.

It in the central section; belongs to the AAA ATPase family. In the C-terminal section; belongs to the peptidase M41 family. As to quaternary structure, homohexamer. Requires Zn(2+) as cofactor.

Its subcellular location is the plastid. It is found in the chloroplast thylakoid membrane. In terms of biological role, acts as a processive, ATP-dependent zinc metallopeptidase. The chain is ATP-dependent zinc metalloprotease FtsH from Guillardia theta (Cryptophyte).